Here is a 263-residue protein sequence, read N- to C-terminus: Protein STK_14130 (263 aa).

It belongs to the CinA family.

This Sulfurisphaera tokodaii (strain DSM 16993 / JCM 10545 / NBRC 100140 / 7) (Sulfolobus tokodaii) protein is Protein STK_14130.